The primary structure comprises 295 residues: Glycine N-methyltransferase (295 aa).

(6S)-5-methyl-5,6,7,8-tetrahydrofolate is bound by residues Ser4 and Tyr6. Residue Ser10 is modified to Phosphoserine. The S-adenosyl-L-methionine site is built by Tyr22, Trp31, Tyr34, and Arg41. Tyr34 carries the post-translational modification Phosphotyrosine. Lys46 bears the N6-succinyllysine mark. S-adenosyl-L-methionine contacts are provided by residues Ala65, 86 to 88, 117 to 118, 139 to 142, and Arg178; these read DAS, NW, and LGNS. N6-succinyllysine is present on residues Lys193, Lys198, and Lys203. (6S)-5-methyl-5,6,7,8-tetrahydrofolate is bound at residue His217. S-adenosyl-L-methionine is bound at residue Tyr223. Residue Arg242 coordinates (6S)-5-methyl-5,6,7,8-tetrahydrofolate.

It belongs to the class I-like SAM-binding methyltransferase superfamily. Glycine N-methyltransferase family. Homotetramer. As to expression, abundant in liver.

Its subcellular location is the cytoplasm. It carries out the reaction glycine + S-adenosyl-L-methionine = sarcosine + S-adenosyl-L-homocysteine + H(+). Inhibited by 5-methyltetrahydrofolate monoglutamate and by 5-methyltetrahydrofolate pentaglutamate, inhibition is much more effective by the pentaglutamate form than by the monoglutamate form. Two molecules of 5-methyltetrahydrofolate are bound per tetramer. The binding sites are localized between subunits. Inhibitor binding may preclude movements of the polypeptide chain that are necessary for enzyme activity. Its function is as follows. Catalyzes the methylation of glycine by using S-adenosylmethionine (AdoMet) to form N-methylglycine (sarcosine) with the concomitant production of S-adenosylhomocysteine (AdoHcy), a reaction regulated by the binding of 5-methyltetrahydrofolate. Plays an important role in the regulation of methyl group metabolism by regulating the ratio between S-adenosyl-L-methionine and S-adenosyl-L-homocysteine. The polypeptide is Glycine N-methyltransferase (GNMT) (Oryctolagus cuniculus (Rabbit)).